The following is a 292-amino-acid chain: Ribosomal protein L11 methyltransferase (292 aa).

4 residues coordinate S-adenosyl-L-methionine: threonine 144, glycine 165, aspartate 187, and asparagine 229.

The protein belongs to the methyltransferase superfamily. PrmA family.

The protein resides in the cytoplasm. It carries out the reaction L-lysyl-[protein] + 3 S-adenosyl-L-methionine = N(6),N(6),N(6)-trimethyl-L-lysyl-[protein] + 3 S-adenosyl-L-homocysteine + 3 H(+). Its function is as follows. Methylates ribosomal protein L11. The sequence is that of Ribosomal protein L11 methyltransferase from Pseudomonas fluorescens (strain SBW25).